The following is a 684-amino-acid chain: Threonine--tRNA ligase (684 aa).

The region spanning 1 to 66 (MTVPATDSWP…DTDAEVVPVA (66 aa)) is the TGS domain. The catalytic stretch occupies residues 261–567 (DHRKLGSELD…LTEHYAGAFP (307 aa)). Residues C366, H417, and H544 each contribute to the Zn(2+) site.

This sequence belongs to the class-II aminoacyl-tRNA synthetase family. In terms of assembly, homodimer. The cofactor is Zn(2+).

The protein resides in the cytoplasm. It carries out the reaction tRNA(Thr) + L-threonine + ATP = L-threonyl-tRNA(Thr) + AMP + diphosphate + H(+). Catalyzes the attachment of threonine to tRNA(Thr) in a two-step reaction: L-threonine is first activated by ATP to form Thr-AMP and then transferred to the acceptor end of tRNA(Thr). Also edits incorrectly charged L-seryl-tRNA(Thr). The chain is Threonine--tRNA ligase from Mycobacterium avium (strain 104).